The following is a 135-amino-acid chain: MEFIIKAKGHKNVSATHKTTLEITKEDYLTPTGHCIIGIDADKSMTDFSEEFKEKLRNAKKIIVEIEVEGIKDTIIGEGHKDLILNHPTDMVIRKSNYICPRTLMINANKSAKDINREIVKKLKEGKELIFKIIV.

This is an uncharacterized protein from Methanocaldococcus jannaschii (strain ATCC 43067 / DSM 2661 / JAL-1 / JCM 10045 / NBRC 100440) (Methanococcus jannaschii).